The following is a 219-amino-acid chain: MKPATVSPIKIARRGLMLVISSPSGAGKSTIARNLLEADPDLSISVSVTTRSRRPSEIEGRHYFFKSIREFEALRATDSLLEWAEVHGNYYGTPRDAVEKAMGEGRDMLFDIDWQGAQQLQEKMAGDVVSIFILPPSMAELQSRLHRRAEDSEEVIATRLANSRAEIEHWREYDYIVVNDDLDRAFSSVRAIVEAERLRRDRRPGLFEFVNGLLTENPL.

Residues 15–194 enclose the Guanylate kinase-like domain; the sequence is GLMLVISSPS…AFSSVRAIVE (180 aa). An ATP-binding site is contributed by 22 to 29; sequence SPSGAGKS.

It belongs to the guanylate kinase family.

The protein resides in the cytoplasm. The catalysed reaction is GMP + ATP = GDP + ADP. Essential for recycling GMP and indirectly, cGMP. This chain is Guanylate kinase, found in Rhizobium meliloti (strain 1021) (Ensifer meliloti).